Consider the following 376-residue polypeptide: MNEQQLLENIASLAGAINQYKNEKEPTQVLDAAKANKNTRSYPYSVSRNYSFILNKSNRSKSTAASPPYVIPSTSSNADDANKEPEKQSTSDYVSRKNRHMQLIKKNILEHDLQARKANLESYRAKLEKEYKTLAENKIQQRLSDGTKQLVTIDGLQYITGVSDTKWLEFVSAKGQCPKYLYWNNKSYLLKKKRFLKEVGNSPSAVYCRYYNANGICGKGAACRFVHEPTRKTICPKFLNGRCNKAEDCNLSHELDPRRIPACRYFLLGKCNNPNCRYVHIHYSENAPICFEFAKYGFCELGTSCKNQHILQCTDYAMFGSCNNPQCSLYHGAVSADVPEQTEAPISKTAGSINPEDSGSEIGSNSLESNLDFISV.

The stretch at 2-25 (NEQQLLENIASLAGAINQYKNEKE) forms a coiled coil. Residues 60-95 (SKSTAASPPYVIPSTSSNADDANKEPEKQSTSDYVS) form a disordered region. Residues 80–89 (DANKEPEKQS) show a composition bias toward basic and acidic residues. Positions 105-140 (KKNILEHDLQARKANLESYRAKLEKEYKTLAENKIQ) form a coiled coil. 4 C3H1-type zinc fingers span residues 202-228 (SPSA…FVHE), 229-256 (PTRK…HELD), 257-283 (PRRI…HIHY), and 284-312 (SENA…HILQ). Residues 347-376 (SKTAGSINPEDSGSEIGSNSLESNLDFISV) form a disordered region. A compositionally biased stretch (polar residues) spans 349 to 369 (TAGSINPEDSGSEIGSNSLES).

Its subcellular location is the nucleus. This Schizosaccharomyces pombe (strain 972 / ATCC 24843) (Fission yeast) protein is Zinc finger CCCH domain-containing protein C337.12.